A 184-amino-acid polypeptide reads, in one-letter code: Ribosome-recycling factor (184 aa).

Positions 141–161 (KKNDKAISEDDQRKGQDDVQK) are disordered.

It belongs to the RRF family.

The protein resides in the cytoplasm. Its function is as follows. Responsible for the release of ribosomes from messenger RNA at the termination of protein biosynthesis. May increase the efficiency of translation by recycling ribosomes from one round of translation to another. This Solidesulfovibrio magneticus (strain ATCC 700980 / DSM 13731 / RS-1) (Desulfovibrio magneticus) protein is Ribosome-recycling factor.